We begin with the raw amino-acid sequence, 177 residues long: Large ribosomal subunit protein uL6 (177 aa).

The protein belongs to the universal ribosomal protein uL6 family. As to quaternary structure, part of the 50S ribosomal subunit.

In terms of biological role, this protein binds to the 23S rRNA, and is important in its secondary structure. It is located near the subunit interface in the base of the L7/L12 stalk, and near the tRNA binding site of the peptidyltransferase center. The chain is Large ribosomal subunit protein uL6 from Janthinobacterium sp. (strain Marseille) (Minibacterium massiliensis).